The chain runs to 175 residues: NADH-ubiquinone oxidoreductase chain 6 (175 aa).

6 consecutive transmembrane segments (helical) span residues 1 to 21 (MMYI…GFSS), 24 to 44 (SPVY…GIIM), 51 to 71 (LGLV…GYTI), 87 to 107 (VVLS…VWLF), 112 to 132 (ELVG…EGGF), and 148 to 168 (CGFW…FIAT).

The protein belongs to the complex I subunit 6 family. Core subunit of respiratory chain NADH dehydrogenase (Complex I) which is composed of 45 different subunits.

The protein localises to the mitochondrion inner membrane. It catalyses the reaction a ubiquinone + NADH + 5 H(+)(in) = a ubiquinol + NAD(+) + 4 H(+)(out). Core subunit of the mitochondrial membrane respiratory chain NADH dehydrogenase (Complex I) which catalyzes electron transfer from NADH through the respiratory chain, using ubiquinone as an electron acceptor. Essential for the catalytic activity and assembly of complex I. The chain is NADH-ubiquinone oxidoreductase chain 6 (MT-ND6) from Elephas maximus (Indian elephant).